The sequence spans 175 residues: Enhancer of mRNA-decapping protein 1 (175 aa).

The segment covering 1–27 (MSTDTMYFNSSRLLPSAGRNKTNNLIK) has biased composition (polar residues). 2 disordered regions span residues 1–113 (MSTD…KDDT) and 155–175 (GSTF…PSFL). S2 carries the post-translational modification N-acetylserine. Over residues 35-47 (ARGNAAKNANNNN) the composition is skewed to low complexity. Residues 58 to 77 (LPNGQKPNFGHSSNKKPSFN) are compositionally biased toward polar residues. The residue at position 82 (S82) is a Phosphoserine. Residues 100–113 (NNKETPRQNNKDDT) are compositionally biased toward basic and acidic residues.

Belongs to the EDC family.

Its subcellular location is the cytoplasm. Functionally, mRNA-binding protein which stimulates mRNA decapping by DCP1 and DCP2. Involved in the regulation of expression of multiple genes involved in glycolysis and gluconeogenesis. This is Enhancer of mRNA-decapping protein 1 (EDC1) from Saccharomyces cerevisiae (strain ATCC 204508 / S288c) (Baker's yeast).